We begin with the raw amino-acid sequence, 199 residues long: Recombination protein RecR (199 aa).

The C4-type zinc-finger motif lies at cysteine 58–cysteine 73. Residues glycine 81 to proline 176 form the Toprim domain.

Belongs to the RecR family.

May play a role in DNA repair. It seems to be involved in an RecBC-independent recombinational process of DNA repair. It may act with RecF and RecO. This Cereibacter sphaeroides (strain ATCC 17029 / ATH 2.4.9) (Rhodobacter sphaeroides) protein is Recombination protein RecR.